The chain runs to 307 residues: Elongation factor Ts (307 aa).

Positions 80–83 (TDFV) are involved in Mg(2+) ion dislocation from EF-Tu.

Belongs to the EF-Ts family.

The protein localises to the cytoplasm. Associates with the EF-Tu.GDP complex and induces the exchange of GDP to GTP. It remains bound to the aminoacyl-tRNA.EF-Tu.GTP complex up to the GTP hydrolysis stage on the ribosome. This is Elongation factor Ts from Xanthobacter autotrophicus (strain ATCC BAA-1158 / Py2).